Here is a 344-residue protein sequence, read N- to C-terminus: Phosphate acyltransferase (344 aa).

This sequence belongs to the PlsX family. As to quaternary structure, homodimer. Probably interacts with PlsY.

It localises to the cytoplasm. The catalysed reaction is a fatty acyl-[ACP] + phosphate = an acyl phosphate + holo-[ACP]. Its pathway is lipid metabolism; phospholipid metabolism. In terms of biological role, catalyzes the reversible formation of acyl-phosphate (acyl-PO(4)) from acyl-[acyl-carrier-protein] (acyl-ACP). This enzyme utilizes acyl-ACP as fatty acyl donor, but not acyl-CoA. The polypeptide is Phosphate acyltransferase (Cyanothece sp. (strain PCC 7425 / ATCC 29141)).